The chain runs to 144 residues: Arsenate reductase ArsI1 (144 aa).

The Nucleophile; cysteine thioarsenate intermediate role is filled by C14.

This sequence belongs to the ArsC family.

It catalyses the reaction [glutaredoxin]-dithiol + arsenate + glutathione + H(+) = glutathionyl-S-S-[glutaredoxin] + arsenite + H2O. Catalyzes the reduction of arsenate [As(V)] to arsenite [As(III)]. Does not constitute the major arsenate reductase in cells: essential only in the absence of ArsC (AC P74313). This is Arsenate reductase ArsI1 from Synechocystis sp. (strain ATCC 27184 / PCC 6803 / Kazusa).